The chain runs to 1526 residues: MMSLINLDLVISAVTSIANPVIKEKILRSETVIKLLQQFNLDPEHPPADFSGVYAYTLVEYGVGKPKAFLELFRQEAIKQAFRKALDHNNPSILLSEVDTFLDACTLGDEIRSLELDVRREVAAFATVFIEVAKRSRTPADVLMNQQIGSLHKRIAGIQEQLERLPTLEGIRTEIARLAAQNYPALTPTATENQCRAIALAQQMRGWFETLGYRLEKYEIWAEEYFEWIINVPVRRSYDRILVRGVAGEVRLSDVMALCQSVNQQKTDEGWLVSTRRISRAARDEVKKEENRHLDCFTFDELIDLDADFSGYLDWLEAEIKRRKIDQKYVPLACTKEEIDPVTKRRIGISRYEAEDGWIDGYIDLWLDDPAKEHISILGEFGTGKTWFVFHYAWTALQRYKDAQRRGVERPRLPLVITLRDFAKALNVENVLAGFFFTQHNIRLNSEVFDQLNRMGKLLLIFDGFDEMAAKVDRQQMINNFWELAKVVVPGSKVILTCRTEHFPEAKEGRALLNAELQASTNKLTGETPQFEVLELEKFNDEQIRQVLLYQAEEATVEQIMGNSQLLDLARRPVMTDLILEALPDIEAGKPIDMSRVYLYAVRHKMERDIKAERTFNSLADKLYFLCELSWEMLSTDQMSLNYRLFPERIRRLFGSVVQEEKDLDHWHYDMMAQTMLVRNADGDYTPAHRSLLEFFVAYKFAAELGALARDFTEVGQAQSGLDSSTASIDYTWSGYFSRQLDSTGCREVIAPLRQFKSEFLDKLRETFGKAKLTKAVIDLLLPMLDDNEPLIKIIEATRGRTEDEVNYVGGNAATLLVKLNKMVLEGRDLSHTVIIGADFTNTSLRCVNFTEANLAYSVFTKILGSVLTVAFSPDGKLFATGDSGGIVRFWEAATGKELLTCKGHNSWVNSVGFSQDGKMLASGSDDQTVRLWDISSGQCLKTFKGHTSRVRSVVFSPNSLMLASGSSDQTVRLWDISSGECLYIFQGHTGWVYSVAFNLDGSMLATGSGDQTVRLWDISSSQCFYIFQGHTSCVRSVVFSSDGAMLASGSDDQTVRLWDISSGNCLYTLQGHTSCVRSVVFSPDGAMLASGGDDQIVRLWDISSGNCLYTLQGYTSWVRFLVFSPNGVTLANGSSDQIVRLWDISSKKCLYTLQGHTNWVNAVAFSPDGATLASGSGDQTVRLWDISSSKCLYILQGHTSWVNSVVFNPDGSTLASGSSDQTVRLWEINSSKCLCTFQGHTSWVNSVVFNPDGSMLASGSSDKTVRLWDISSSKCLHTFQGHTNWVNSVAFNPDGSMLASGSGDQTVRLWEISSSKCLHTFQGHTSWVSSVTFSPDGTMLASGSDDQTVRLWSISSGECLYTFLGHTNWVGSVIFSPDGAILASGSGDQTVRLWSISSGKCLYTLQGHNNWVGSIVFSPDGTLLASGSDDQTVRLWNISSGECLYTLHGHINSVRSVAFSSDGLILASGSDDETIKLWDVKTGECIKTLKSEKIYEGMNITSVRGLTEVEKATLKTLGAVENREI.

16 WD repeats span residues 334–376 (CTKE…EHIS), 862–901 (KILG…ELLT), 904–945 (GHNS…KTFK), 946–985 (GHTS…CLYI), 988–1027 (GHTG…CFYI), 1030–1069 (GHTS…CLYT), 1072–1111 (GHTS…CLYT), 1114–1153 (GYTS…CLYT), 1156–1195 (GHTN…CLYI), 1198–1237 (GHTS…CLCT), 1240–1279 (GHTS…CLHT), 1282–1321 (GHTN…CLHT), 1324–1363 (GHTS…CLYT), 1366–1405 (GHTN…CLYT), 1408–1447 (GHNN…CLYT), and 1450–1491 (GHIN…KTLK). Residues 823-862 (MVLEGRDLSHTVIIGADFTNTSLRCVNFTEANLAYSVFTK) enclose the Pentapeptide repeat domain.

This is an uncharacterized protein from Nostoc sp. (strain PCC 7120 / SAG 25.82 / UTEX 2576).